The primary structure comprises 86 residues: Small ribosomal subunit protein uS17 (86 aa).

This sequence belongs to the universal ribosomal protein uS17 family. As to quaternary structure, part of the 30S ribosomal subunit.

Functionally, one of the primary rRNA binding proteins, it binds specifically to the 5'-end of 16S ribosomal RNA. The polypeptide is Small ribosomal subunit protein uS17 (Desulfotalea psychrophila (strain LSv54 / DSM 12343)).